The chain runs to 270 residues: Bis(5'-nucleosyl)-tetraphosphatase, symmetrical (270 aa).

The protein belongs to the Ap4A hydrolase family.

It carries out the reaction P(1),P(4)-bis(5'-adenosyl) tetraphosphate + H2O = 2 ADP + 2 H(+). Hydrolyzes diadenosine 5',5'''-P1,P4-tetraphosphate to yield ADP. This Thioalkalivibrio sulfidiphilus (strain HL-EbGR7) protein is Bis(5'-nucleosyl)-tetraphosphatase, symmetrical.